A 599-amino-acid polypeptide reads, in one-letter code: MFDPKPVLKNLPNLPGVYRMINAQDEVIYVGKARDLKKRVSSYFQKNLPSARTRLMVSNIARIETTVTRSEAEALLLENNLIKGFMPRYNVLFRDDKSYPYIALTGDTFPRLAFHRGAQRKGSSYFGPFPNAVAVRESIQLLQKVFRLRTCENTVFANRSRPCLLHQIERCTAPCVGFISEEDYRRDVMHASLFLQGKEQQVMDELGEKMNEAAEKMEYELAAVYRDRIQSLRQVQAKQFVSDFNVSDADVIACAELEGQWCVNLVMIRGGHHLGDKSFFPKNADGADLETTMEAFLEQHYMAGAIPPLLIVGASLETAALEEVFSEQAGRRIRINTHPIGDKRVWLKMAHTNAQLALSQRIAQQANQQSRLNALREALGLPESTERIECFDISHTMGEATVASCVVFDKGAMQSSEYRRYNITGITPGDDYAAMRDVLTRRYRKVAAGEGKRPDLVFIDGGKGQLGVAVEVLNEVGLPDIQLVGIAKGEERKPGLEQMFFPEREEPVSLKKDHPGLHLLQQIRDEAHRFAITGHRAKRGKARMHSSLEDISGIGAKRRKSLLTRFGGLDGVKNASVDEIAQVDGISHALAQKIYEELH.

A GIY-YIG domain is found at 13–91 (NLPGVYRMIN…IKGFMPRYNV (79 aa)). Residues 200 to 235 (QQVMDELGEKMNEAAEKMEYELAAVYRDRIQSLRQV) form the UVR domain.

It belongs to the UvrC family. In terms of assembly, interacts with UvrB in an incision complex.

The protein resides in the cytoplasm. Functionally, the UvrABC repair system catalyzes the recognition and processing of DNA lesions. UvrC both incises the 5' and 3' sides of the lesion. The N-terminal half is responsible for the 3' incision and the C-terminal half is responsible for the 5' incision. In Methylobacillus flagellatus (strain ATCC 51484 / DSM 6875 / VKM B-1610 / KT), this protein is UvrABC system protein C.